Consider the following 281-residue polypeptide: Homeobox protein Hox-A5 (281 aa).

Disordered regions lie at residues 65-144 and 162-183; these read VGNE…PCSS and PLEE…SDST. 2 stretches are compositionally biased toward polar residues: residues 68-99 and 114-127; these read ERTQ…STGT and VASS…QSQH. A compositionally biased stretch (low complexity) spans 132–144; the sequence is NSITTPCSTPCSS. Residues 172-183 show a composition bias toward polar residues; the sequence is APTTPQNVSDST. The short motif at 187 to 192 is the Antp-type hexapeptide element; sequence IYPWMR. Residues 205 to 264 constitute a DNA-binding region (homeobox); it reads GKRARTAYTRYQTLELEKEFHFNRYLTRRRRIEIAHALCLSERQIKIWFQNRRMKWKKDN.

Belongs to the Antp homeobox family.

It is found in the nucleus. In terms of biological role, sequence-specific transcription factor which is part of a developmental regulatory system that provides cells with specific positional identities on the anterior-posterior axis. In Morone saxatilis (Striped bass), this protein is Homeobox protein Hox-A5 (hoxa5).